The following is a 408-amino-acid chain: UDP-N-acetylglucosamine--dolichyl-phosphate N-acetylglucosaminephosphotransferase (408 aa).

The Lumenal segment spans residues 1 to 10 (MWAFPELPLP). Residues 11 to 38 (LLVNLFGSLLGFVATVTLIPAFRSHFIA) traverse the membrane as a helical segment. Topologically, residues 39–58 (ARLCGQDLNKLSRQQIPESQ) are cytoplasmic. UDP-N-acetyl-alpha-D-glucosamine is bound by residues 44-46 (QDL) and Glu-56. The chain crosses the membrane as a helical span at residues 59-78 (GVICGAVFLIILFCFIPFPF). Over 79–91 (LNCFVEEQCKAFP) the chain is Lumenal. The chain crosses the membrane as a helical span at residues 92-118 (HHEFVALIGALLAICCMIFLGFADDVL). Topologically, residues 119–121 (NLR) are cytoplasmic. Residues 122 to 143 (WRHKLLLPTAASLPLLMVYFTN) traverse the membrane as a helical segment. Lys-125 serves as a coordination point for dolichyl phosphate. Topologically, residues 144–166 (FGNTTIVVPKPFRWILGLHLDLG) are lumenal. N-linked (GlcNAc...) asparagine glycosylation occurs at Asn-146. The helical transmembrane segment at 167-186 (ILYYVYMGLLAVFCTNAINI) threads the bilayer. 178–186 (VFCTNAINI) is a binding site for dolichyl phosphate. Asn-185 provides a ligand contact to Mg(2+). Residues 187-192 (LAGING) are Cytoplasmic-facing. Position 191 (Asn-191) interacts with UDP-N-acetyl-alpha-D-glucosamine. Residues 193-213 (LEAGQSLVISASIIVFNLVEL) traverse the membrane as a helical segment. The Lumenal portion of the chain corresponds to 214–218 (EGDYR). The chain crosses the membrane as a helical span at residues 219–242 (DDHVFSLYFMIPFFFTTLGLLYHN). The Cytoplasmic segment spans residues 243-250 (WYPSQVFV). The helical transmembrane segment at 251–269 (GDTFCYFAGMTFAVVGILG) threads the bilayer. A Mg(2+)-binding site is contributed by Asp-252. Residues 270–271 (HF) lie on the Lumenal side of the membrane. Residues 272–293 (SKTMLLFFIPQVFNFLYSLPQL) traverse the membrane as a helical segment. The Cytoplasmic segment spans residues 294–375 (LHAIPCPRHR…LLLKIFGPIH (82 aa)). Residue 301–303 (RHR) participates in UDP-N-acetyl-alpha-D-glucosamine binding. A helical transmembrane segment spans residues 376 to 400 (ERNLTLLLLLLQILSSAVTFSIRYQ). Topologically, residues 401–408 (LVRLFYDV) are lumenal.

The protein belongs to the glycosyltransferase 4 family. As to quaternary structure, homodimer. Mg(2+) is required as a cofactor.

It localises to the endoplasmic reticulum membrane. The catalysed reaction is a di-trans,poly-cis-dolichyl phosphate + UDP-N-acetyl-alpha-D-glucosamine = an N-acetyl-alpha-D-glucosaminyl-diphospho-di-trans,poly-cis-dolichol + UMP. Its pathway is protein modification; protein glycosylation. Inhibited by natural nucleoside antibiotic tunicamycin, which acts as a structural analog and competitor of UDP-GlcNAc. Functionally, UDP-N-acetylglucosamine--dolichyl-phosphate N-acetylglucosaminephosphotransferase that operates in the biosynthetic pathway of dolichol-linked oligosaccharides, the glycan precursors employed in protein asparagine (N)-glycosylation. The assembly of dolichol-linked oligosaccharides begins on the cytosolic side of the endoplasmic reticulum membrane and finishes in its lumen. The sequential addition of sugars to dolichol pyrophosphate produces dolichol-linked oligosaccharides containing fourteen sugars, including two GlcNAcs, nine mannoses and three glucoses. Once assembled, the oligosaccharide is transferred from the lipid to nascent proteins by oligosaccharyltransferases. Catalyzes the initial step of dolichol-linked oligosaccharide biosynthesis, transfering GlcNAc-1-P from cytosolic UDP-GlcNAc onto the carrier lipid dolichyl phosphate (P-dolichol), yielding GlcNAc-P-P-dolichol embedded in the cytoplasmic leaflet of the endoplasmic reticulum membrane. This is UDP-N-acetylglucosamine--dolichyl-phosphate N-acetylglucosaminephosphotransferase (DPAGT1) from Cricetulus griseus (Chinese hamster).